Reading from the N-terminus, the 527-residue chain is MLLSIKDLSEKYIMLLDVKDLSTLKTTVAVLVTVALIAQVLWKIFFHPLSAFPGPWFNRISEIPGSWVIATGKQHSYYRKLHEKYGPVVRVAPNELSFIGDRAWDDIYGVQKKGPNFEKSPIFIGAVSPLDGQTGISLAPNEAHTRQRRALAHVFSNTALLQQEEIMRSHVDKLVGQLKKTIAENRPINFSNWYTYTTFDMMGDLCFAEPFGCLDQGGATEWSTSVINVFKSAAWDQSIRRVAGVNTWLQKLMVKLLIPSKAANWRKVHFQNSREKTLRRLADGNREHKDFIYHILKNKEAKNSLSETEIILNMVLLISAGTETTASLLTGWTYFICTHPEVYKRLTDEIRGRFNSEQDITWETVKDLPYLHATLSEALRLYSPAPANQQRIVPPGGSVIDGHFVPGKTTVAVAPWAAINSSLNFKDPQKFIPERWLGDERFVNDKLNASQPFSLGPRGCIGKNLSFFEMRLITSRLLWNFDVSLVTTGEHGETNKLWDMDGAGKYMKVYQTWNKPDMWVMLKEVPR.

The helical transmembrane segment at 26 to 46 threads the bilayer; the sequence is TTVAVLVTVALIAQVLWKIFF. N-linked (GlcNAc...) asparagine glycosylation is found at asparagine 189, asparagine 420, and asparagine 448. Residue cysteine 460 participates in heme binding. An N-linked (GlcNAc...) asparagine glycan is attached at asparagine 464.

This sequence belongs to the cytochrome P450 family. The cofactor is heme.

It localises to the membrane. The protein operates within hormone biosynthesis. Cytochrome P450 monooxygenase; part of the gene cluster that mediates the biosynthesis of abscisic acid (ABA), a phytohormone that acts antagonistically toward salicylic acid (SA), jasmonic acid (JA) and ethylene (ETH) signaling, to impede plant defense responses. The first step of the pathway catalyzes the reaction from farnesyl diphosphate to alpha-ionylideneethane performed by the alpha-ionylideneethane synthase aba3 via a three-step reaction mechanism involving 2 neutral intermediates, beta-farnesene and allofarnesene. The cytochrome P450 monooxygenase aba1 might then be involved in the conversion of alpha-ionylideneethane to alpha-ionylideneacetic acid. Alpha-ionylideneacetic acid is further converted to abscisic acid in 2 steps involving the cytochrome P450 monooxygenase aba2 and the short-chain dehydrogenase/reductase aba4, via the intermediates 1'-deoxy-ABA or 1',4'-trans-diol-ABA, depending on the order of action of these 2 enzymes. Aba2 is responsible for the hydroxylation of carbon atom C-1' and aba4 might be involved in the oxidation of the C-4' carbon atom. This chain is Cytochrome P450 monooxygenase aba2 (aba2), found in Botryotinia fuckeliana (strain B05.10) (Noble rot fungus).